The sequence spans 224 residues: Twisted gastrulation protein homolog 1 (224 aa).

Positions 1 to 26 (MRSPCAALSASLLLLLLLLWARSSVG) are cleaved as a signal peptide. Asn53, Asn82, and Asn148 each carry an N-linked (GlcNAc...) asparagine glycan.

This sequence belongs to the twisted gastrulation protein family. In terms of assembly, interacts with CHRD and BMP4. This interaction enhances CHRD/BMP4 complex formation. Interacts with BMP7.

The protein localises to the secreted. May be involved in dorsoventral axis formation. Seems to antagonize BMP signaling by forming ternary complexes with CHRD and BMPs, thereby preventing BMPs from binding to their receptors. In addition to the anti-BMP function, also has pro-BMP activity, partly mediated by cleavage and degradation of CHRD, which releases BMPs from ternary complexes. May be an important modulator of BMP-regulated cartilage development and chondrocyte differentiation. May play a role in thymocyte development. This chain is Twisted gastrulation protein homolog 1 (TWSG1), found in Gallus gallus (Chicken).